The primary structure comprises 476 residues: Protein DETOXIFICATION 4 (476 aa).

Transmembrane regions (helical) follow at residues 35–55 (AVPM…SVMV), 66–86 (GVAL…FGLV), 117–137 (IPIC…LISL), 154–174 (LIPT…LLAQ), 176–196 (LVLP…AVCW), 208–228 (GAAL…SCYV), 260–280 (AAML…SGLL), 289–309 (VLSI…GVAA), 332–352 (LAGL…LFAF), 370–390 (VADL…TAVL), 408–428 (VVAY…SCEL), and 433–453 (LWCG…IVTA).

It belongs to the multi antimicrobial extrusion (MATE) (TC 2.A.66.1) family.

The protein localises to the membrane. This chain is Protein DETOXIFICATION 4, found in Arabidopsis thaliana (Mouse-ear cress).